The primary structure comprises 723 residues: CSC1-like protein ERD4 (723 aa).

Residues 1–5 (MEFAS) are Cytoplasmic-facing. Residues 6 to 26 (FLVSLGTSAIIFVVLMFLFTW) traverse the membrane as a helical segment. At 27-90 (LSRRPGNVPV…TAVYFVFQST (64 aa)) the chain is on the extracellular side. Residues 91-111 (VLGIFALSALLLLPTLLPIAA) traverse the membrane as a helical segment. The Cytoplasmic portion of the chain corresponds to 112–148 (TDNNLETSRSATDTTSNGTFSQLDNLSMANITKSSSR). The helical transmembrane segment at 149 to 169 (LWAFLGAVYWVSVVTYFMLWK) threads the bilayer. Over 170–364 (AYKHVAALRA…IKFFSRIVRQ (195 aa)) the chain is Extracellular. The chain crosses the membrane as a helical span at residues 365–385 (YVIYFLVAITILFYMIPIAFV). At 386 to 416 (SAITTLANLQKALPFLKPIVDIAFIRTILES) the chain is on the cytoplasmic side. A helical transmembrane segment spans residues 417-437 (YLPQIALIVFLAMLPKFLMFL). Residues 438-456 (SKSEGIPSQSHAIRATSGK) lie on the Extracellular side of the membrane. Residues 457–477 (YFYFSVLNVFIGVTLAGSLFE) traverse the membrane as a helical segment. At 478–508 (NLKALEEKPNSFITLLATSLPKSATFFLTYV) the chain is on the cytoplasmic side. A helical membrane pass occupies residues 509-529 (ALKFFVGYGLELSRIIPLIIF). Residues 530–572 (HLKKKYLCKTEAEVKEAWYPGDLSYATRVPSDMLILTITFCYS) lie on the Extracellular side of the membrane. The helical transmembrane segment at 573–593 (VIAPLILVFGVIYFGLGWLIL) threads the bilayer. Topologically, residues 594 to 614 (RNQALKVYVPSYESYGRMWPH) are cytoplasmic. A helical membrane pass occupies residues 615–635 (IHTRILAALFLFQLVMFGYLG). Residues 636 to 637 (VK) are Extracellular-facing. The helical transmembrane segment at 638-658 (IFVWAILLVPLIFISLIFGYV) threads the bilayer. Residues 659–723 (CRQKFYGGFE…YQDYAAISAA (65 aa)) are Cytoplasmic-facing.

Belongs to the CSC1 (TC 1.A.17) family.

It is found in the plastid. Its subcellular location is the chloroplast membrane. Acts as an osmosensitive calcium-permeable cation channel. The polypeptide is CSC1-like protein ERD4 (ERD4) (Brassica juncea (Indian mustard)).